The chain runs to 324 residues: Ribonucleoside-diphosphate reductase subunit beta nrdF2 (324 aa).

2 residues coordinate Fe cation: Glu103 and His106. Tyr110 is an active-site residue. 3 residues coordinate Fe cation: Glu163, Glu197, and His200.

Belongs to the ribonucleoside diphosphate reductase small chain family. As to quaternary structure, tetramer of two alpha and two beta subunits. Fe cation serves as cofactor.

It carries out the reaction a 2'-deoxyribonucleoside 5'-diphosphate + [thioredoxin]-disulfide + H2O = a ribonucleoside 5'-diphosphate + [thioredoxin]-dithiol. In terms of biological role, provides the precursors necessary for DNA synthesis. Catalyzes the biosynthesis of deoxyribonucleotides from the corresponding ribonucleotides. The protein is Ribonucleoside-diphosphate reductase subunit beta nrdF2 (nrdF2) of Mycobacterium tuberculosis (strain CDC 1551 / Oshkosh).